The chain runs to 469 residues: ATP-dependent protease ATPase subunit HslU (469 aa).

Residues Ile-24, Gly-66–Glu-71, Asp-282, Glu-347, and Arg-419 each bind ATP.

It belongs to the ClpX chaperone family. HslU subfamily. In terms of assembly, a double ring-shaped homohexamer of HslV is capped on each side by a ring-shaped HslU homohexamer. The assembly of the HslU/HslV complex is dependent on binding of ATP.

The protein localises to the cytoplasm. Functionally, ATPase subunit of a proteasome-like degradation complex; this subunit has chaperone activity. The binding of ATP and its subsequent hydrolysis by HslU are essential for unfolding of protein substrates subsequently hydrolyzed by HslV. HslU recognizes the N-terminal part of its protein substrates and unfolds these before they are guided to HslV for hydrolysis. The protein is ATP-dependent protease ATPase subunit HslU of Listeria monocytogenes serotype 4a (strain HCC23).